The sequence spans 65 residues: Sodium channel alpha-toxin Acra4 (65 aa).

One can recognise an LCN-type CS-alpha/beta domain in the interval 2-63 (RDGYIVDDKN…PIKDPSYKCH (62 aa)). Intrachain disulfides connect cysteine 12-cysteine 62, cysteine 16-cysteine 34, cysteine 20-cysteine 44, and cysteine 24-cysteine 46. A propeptide (removed by a carboxypeptidase) is located at residue arginine 65.

Belongs to the long (4 C-C) scorpion toxin superfamily. Sodium channel inhibitor family. Alpha subfamily. As to expression, expressed by the venom gland.

Its subcellular location is the secreted. Functionally, alpha toxins bind voltage-independently at site-3 of sodium channels (Nav) and inhibit the inactivation of the activated channels, thereby blocking neuronal transmission. Electrophysiological studies of this were performed using sodium-channels expressed in F11 cell culture, by patch-clamp recordings. Affinity of this toxin toward sodium channels in F11 cell line is in the order of 1 uM concentration. The chain is Sodium channel alpha-toxin Acra4 from Androctonus crassicauda (Arabian fat-tailed scorpion).